The chain runs to 99 residues: Thylakoid membrane protein ssl2009 (99 aa).

Residues 10–30 (GFLLGTVIGGVVGGILGSVLA) form a helical membrane-spanning segment. Residues 50–84 (NLDSEENIELARRRLEDKIAQLNLVIDDVRDQLGH) are a coiled coil.

The protein localises to the cellular thylakoid membrane. This chain is Thylakoid membrane protein ssl2009, found in Synechocystis sp. (strain ATCC 27184 / PCC 6803 / Kazusa).